Here is a 103-residue protein sequence, read N- to C-terminus: Pterin-4-alpha-carbinolamine dehydratase 2 (103 aa).

This sequence belongs to the pterin-4-alpha-carbinolamine dehydratase family. As to expression, highest level found in the kidney, liver, heart and ovarian follicles.

It carries out the reaction (4aS,6R)-4a-hydroxy-L-erythro-5,6,7,8-tetrahydrobiopterin = (6R)-L-erythro-6,7-dihydrobiopterin + H2O. Involved in tetrahydrobiopterin biosynthesis. Seems to both prevent the formation of 7-pterins and accelerate the formation of quinonoid-BH2. Its function is as follows. Regulates the dimerization of homeodomain protein HNF-1-alpha and enhances its transcriptional activity. The sequence is that of Pterin-4-alpha-carbinolamine dehydratase 2 (PCBD2) from Gallus gallus (Chicken).